We begin with the raw amino-acid sequence, 530 residues long: Calcium-dependent protein kinase 14 (530 aa).

G2 carries the N-myristoyl glycine lipid modification. The Protein kinase domain occupies 54-312 (YKLGRELGRG…AQQVLDHPWI (259 aa)). Residues 60–68 (LGRGEFGVT) and K83 each bind ATP. The active-site Proton acceptor is the D178. Phosphoserine is present on S218. The tract at residues 318-348 (ASNVSLGETVRARLKQFSVMNKLKKRALRVI) is autoinhibitory domain. EF-hand domains follow at residues 355–390 (EETS…LGIV), 391–426 (VPQD…IRKL), 427–462 (GNDE…DVDT), and 463–498 (TSEE…GTDW). Ca(2+) contacts are provided by D368, S370, K374, E379, D404, D406, D408, Y410, E415, D440, N442, S444, Y446, E451, D476, N478, D480, and K482. Position 484 is a phosphoserine (S484). E487 is a binding site for Ca(2+).

It belongs to the protein kinase superfamily. Ser/Thr protein kinase family. CDPK subfamily.

Its subcellular location is the membrane. The catalysed reaction is L-seryl-[protein] + ATP = O-phospho-L-seryl-[protein] + ADP + H(+). The enzyme catalyses L-threonyl-[protein] + ATP = O-phospho-L-threonyl-[protein] + ADP + H(+). With respect to regulation, activated by calcium. Autophosphorylation may play an important role in the regulation of the kinase activity. Functionally, may play a role in signal transduction pathways that involve calcium as a second messenger. This Arabidopsis thaliana (Mouse-ear cress) protein is Calcium-dependent protein kinase 14 (CPK14).